The primary structure comprises 559 residues: Formate--tetrahydrofolate ligase (559 aa).

68 to 75 (TPAGEGKT) contributes to the ATP binding site.

Belongs to the formate--tetrahydrofolate ligase family.

The catalysed reaction is (6S)-5,6,7,8-tetrahydrofolate + formate + ATP = (6R)-10-formyltetrahydrofolate + ADP + phosphate. The protein operates within one-carbon metabolism; tetrahydrofolate interconversion. This is Formate--tetrahydrofolate ligase from Rhizobium etli (strain ATCC 51251 / DSM 11541 / JCM 21823 / NBRC 15573 / CFN 42).